We begin with the raw amino-acid sequence, 114 residues long: Ribosome-binding factor A (114 aa).

It belongs to the RbfA family. As to quaternary structure, monomer. Binds 30S ribosomal subunits, but not 50S ribosomal subunits or 70S ribosomes.

The protein localises to the cytoplasm. Its function is as follows. One of several proteins that assist in the late maturation steps of the functional core of the 30S ribosomal subunit. Associates with free 30S ribosomal subunits (but not with 30S subunits that are part of 70S ribosomes or polysomes). Required for efficient processing of 16S rRNA. May interact with the 5'-terminal helix region of 16S rRNA. This is Ribosome-binding factor A from Vesicomyosocius okutanii subsp. Calyptogena okutanii (strain HA).